Here is a 340-residue protein sequence, read N- to C-terminus: Lipopolysaccharide core biosynthesis glycosyltransferase LpsE (340 aa).

This sequence belongs to the glycosyltransferase group 1 family. Glycosyltransferase 4 subfamily.

It participates in bacterial outer membrane biogenesis; LPS core biosynthesis. This Rhizobium meliloti (strain 1021) (Ensifer meliloti) protein is Lipopolysaccharide core biosynthesis glycosyltransferase LpsE (lpsE).